The sequence spans 262 residues: Glutamate racemase (262 aa).

Residues 5–6 (DS) and 37–38 (YG) each bind substrate. The active-site Proton donor/acceptor is the Cys69. A substrate-binding site is contributed by 70 to 71 (NT). The active-site Proton donor/acceptor is Cys181. 182–183 (TH) contacts substrate.

Belongs to the aspartate/glutamate racemases family.

It catalyses the reaction L-glutamate = D-glutamate. It functions in the pathway cell wall biogenesis; peptidoglycan biosynthesis. In terms of biological role, provides the (R)-glutamate required for cell wall biosynthesis. The polypeptide is Glutamate racemase (Buchnera aphidicola subsp. Acyrthosiphon pisum (strain Tuc7)).